A 203-amino-acid chain; its full sequence is Holliday junction branch migration complex subunit RuvA (203 aa).

The tract at residues 1–62 is domain I; sequence MYEYFLGQVT…ENGMSLFGFF (62 aa). The interval 63–141 is domain II; the sequence is DADEKALFEK…DLNVDVTGQT (79 aa). The flexible linker stretch occupies residues 142–148; sequence ALDVDAP. Positions 149–203 are domain III; that stretch reads AVDGALADALAALEALGYSKADVKKVTKKLETFSQTQGADTNTLLSEGLRLLMKK.

The protein belongs to the RuvA family. Homotetramer. Forms an RuvA(8)-RuvB(12)-Holliday junction (HJ) complex. HJ DNA is sandwiched between 2 RuvA tetramers; dsDNA enters through RuvA and exits via RuvB. An RuvB hexamer assembles on each DNA strand where it exits the tetramer. Each RuvB hexamer is contacted by two RuvA subunits (via domain III) on 2 adjacent RuvB subunits; this complex drives branch migration. In the full resolvosome a probable DNA-RuvA(4)-RuvB(12)-RuvC(2) complex forms which resolves the HJ.

The protein localises to the cytoplasm. The RuvA-RuvB-RuvC complex processes Holliday junction (HJ) DNA during genetic recombination and DNA repair, while the RuvA-RuvB complex plays an important role in the rescue of blocked DNA replication forks via replication fork reversal (RFR). RuvA specifically binds to HJ cruciform DNA, conferring on it an open structure. The RuvB hexamer acts as an ATP-dependent pump, pulling dsDNA into and through the RuvAB complex. HJ branch migration allows RuvC to scan DNA until it finds its consensus sequence, where it cleaves and resolves the cruciform DNA. In Lactiplantibacillus plantarum (strain ATCC BAA-793 / NCIMB 8826 / WCFS1) (Lactobacillus plantarum), this protein is Holliday junction branch migration complex subunit RuvA.